The sequence spans 184 residues: Oligoribonuclease (184 aa).

The Exonuclease domain maps to 8 to 171 (LIWIDLEMTG…EDIRESVVEL (164 aa)). Y129 is a catalytic residue.

Belongs to the oligoribonuclease family.

It is found in the cytoplasm. Functionally, 3'-to-5' exoribonuclease specific for small oligoribonucleotides. The sequence is that of Oligoribonuclease from Buchnera aphidicola subsp. Acyrthosiphon pisum (strain APS) (Acyrthosiphon pisum symbiotic bacterium).